Reading from the N-terminus, the 221-residue chain is Small ribosomal subunit protein uS5 (221 aa).

Residues 46 to 109 (LKDEVINIER…DNAKLNIIEI (64 aa)) enclose the S5 DRBM domain.

Belongs to the universal ribosomal protein uS5 family. As to quaternary structure, part of the 30S ribosomal subunit. Contacts protein S4.

Its function is as follows. With S4 and S12 plays an important role in translational accuracy. This is Small ribosomal subunit protein uS5 from Picrophilus torridus (strain ATCC 700027 / DSM 9790 / JCM 10055 / NBRC 100828 / KAW 2/3).